Here is a 174-residue protein sequence, read N- to C-terminus: MDNGIFIVATIFVVNILYVTIYTVRLLLTMKGYRYLAALSSVFEMIIYVVALSLVLDNLNNIANVLAYAIGFGVGIIVGMKIEERIALGYITVNVITKEYNLDLPNQIRDLGYGVTSWLASGRDGERMMLEILTQRKNERKLYKHIIEIDSGAFIVSSEPKQIHGGFWVKQVRK.

A run of 3 helical transmembrane segments spans residues 4 to 24 (GIFI…IYTV), 36 to 56 (LAAL…SLVL), and 62 to 82 (IANV…GMKI).

This sequence belongs to the UPF0316 family.

It localises to the cell membrane. The protein is UPF0316 protein LMHCC_0787 of Listeria monocytogenes serotype 4a (strain HCC23).